The following is a 427-amino-acid chain: GTPase Obg (427 aa).

The Obg domain occupies 1-158 (MFVDIAKIYV…LWVILELKVL (158 aa)). Residues 159–330 (ADVGLIGYPN…VLKRAYELLK (172 aa)) form the OBG-type G domain. GTP is bound by residues 165–172 (GYPNVGKS), 190–194 (FTTKY), 212–215 (DIPG), 282–285 (NKMD), and 311–313 (SAA). Residues serine 172 and threonine 192 each coordinate Mg(2+). The region spanning 347-427 (FVYYKKKDVK…ILDVEFEYYE (81 aa)) is the OCT domain.

This sequence belongs to the TRAFAC class OBG-HflX-like GTPase superfamily. OBG GTPase family. Monomer. Mg(2+) serves as cofactor.

The protein resides in the cytoplasm. Functionally, an essential GTPase which binds GTP, GDP and possibly (p)ppGpp with moderate affinity, with high nucleotide exchange rates and a fairly low GTP hydrolysis rate. Plays a role in control of the cell cycle, stress response, ribosome biogenesis and in those bacteria that undergo differentiation, in morphogenesis control. The polypeptide is GTPase Obg (Caldicellulosiruptor saccharolyticus (strain ATCC 43494 / DSM 8903 / Tp8T 6331)).